The primary structure comprises 489 residues: MSVYGLQRLYIGGGYVDATSGKTFDTFDPATGELLAQVQQASAADVDRAVASAREGQREWAAMTAMQRSRILRRAVDLLRERNDELAAIETRDTGKPIGETLAVDIVTGADVIEYYAGLATAIEGLQVPLRAESFVYTRREPLGVCAGIGAWNYPIQIACWKTAPALAAGNAMVFKPSEVTPLTALKLAEIYTEAGVPAGVFNVVQGDGSVGALLTGHPDIAKVSFTGGVETGKKVMSLAGASSLKEVTMELGGKSPLIVFEDADLDRAADIAVTANFFSSGQVCTNGTRVFVHRSVKDAFTQRVLERVKRIRVGKPTDADTNFGPLVSAAQLDKVLGFIDSGKAEGAKLLAGGTRLTDGHFGSGQYVAPTVFGDCRDDMKIVREEIFGPVMSILDFESEDEVIARANDTHYGLAAGVVTENLSRAHRTIHRLEAGICWINTWGESPAEMPVGGYKQSGVGRENGITTLEHYTRIKSVQVELGRYNPVF.

Positions 26 and 93 each coordinate K(+). 150–152 (GAW) contacts NAD(+). K162 acts as the Charge relay system in catalysis. 176-179 (KPSE) provides a ligand contact to NAD(+). V180 lines the K(+) pocket. 229–232 (GVET) provides a ligand contact to NAD(+). L245 serves as a coordination point for K(+). E251 functions as the Proton acceptor in the catalytic mechanism. NAD(+) is bound by residues G253, C285, and E386. Residue C285 is the Nucleophile of the active site. Residue C285 is modified to Cysteine sulfenic acid (-SOH). The K(+) site is built by K456 and G459. The Charge relay system role is filled by E463.

This sequence belongs to the aldehyde dehydrogenase family. Dimer of dimers. Requires K(+) as cofactor.

It carries out the reaction betaine aldehyde + NAD(+) + H2O = glycine betaine + NADH + 2 H(+). It functions in the pathway amine and polyamine biosynthesis; betaine biosynthesis via choline pathway; betaine from betaine aldehyde: step 1/1. Involved in the biosynthesis of the osmoprotectant glycine betaine. Catalyzes the irreversible oxidation of betaine aldehyde to the corresponding acid. The chain is Betaine aldehyde dehydrogenase from Burkholderia ambifaria (strain MC40-6).